The chain runs to 265 residues: Ribosomal RNA small subunit methyltransferase A (265 aa).

Residues histidine 17, leucine 19, glycine 44, glutamate 65, aspartate 90, and asparagine 112 each contribute to the S-adenosyl-L-methionine site.

Belongs to the class I-like SAM-binding methyltransferase superfamily. rRNA adenine N(6)-methyltransferase family. RsmA subfamily.

It is found in the cytoplasm. It catalyses the reaction adenosine(1518)/adenosine(1519) in 16S rRNA + 4 S-adenosyl-L-methionine = N(6)-dimethyladenosine(1518)/N(6)-dimethyladenosine(1519) in 16S rRNA + 4 S-adenosyl-L-homocysteine + 4 H(+). Functionally, specifically dimethylates two adjacent adenosines (A1518 and A1519) in the loop of a conserved hairpin near the 3'-end of 16S rRNA in the 30S particle. May play a critical role in biogenesis of 30S subunits. This chain is Ribosomal RNA small subunit methyltransferase A, found in Xylella fastidiosa (strain Temecula1 / ATCC 700964).